The primary structure comprises 61 residues: Conotoxin Vn5.3 (61 aa).

The signal sequence occupies residues 1–19 (MRCLPVFVILLLLIASAPG). A propeptide spanning residues 20–50 (VDVQPKTKYYVPRASRRDFAKKTPKRLSKLR) is cleaved from the precursor.

Belongs to the conotoxin T superfamily. In terms of processing, contains 2 disulfide bonds that can be either 'C1-C3, C2-C4' or 'C1-C4, C2-C3', since these disulfide connectivities have been observed for conotoxins with cysteine framework V (for examples, see AC P0DQQ7 and AC P81755). Expressed by the venom duct.

It is found in the secreted. In Conus ventricosus (Mediterranean cone), this protein is Conotoxin Vn5.3.